An 83-amino-acid polypeptide reads, in one-letter code: Insect toxin 2-13 (83 aa).

An N-terminal signal peptide occupies residues 1 to 21 (MKLLLLLIITASMLIEGLVNA). An LCN-type CS-alpha/beta domain is found at 22-80 (DVYIRRHDGCKISCTVNDKYCDNECKSEGGSYGYCYAFGCWCEGLPNDKAWKSETNTCG). 4 disulfide bridges follow: C31–C79, C35–C56, C42–C61, and C46–C63. Position 80 is a glycine amide (G80).

Belongs to the long (4 C-C) scorpion toxin superfamily. Sodium channel inhibitor family. Beta subfamily. Expressed by the venom gland.

It is found in the secreted. Its function is as follows. Depressant insect toxins cause a transient contraction paralysis followed by a slow flaccid paralysis. They bind voltage-independently to sodium channels (Nav) and block action potentials, primarily by depolarizing the axonal membrane and suppressing the sodium current. This chain is Insect toxin 2-13, found in Leiurus hebraeus (Hebrew deathstalker scorpion).